Consider the following 796-residue polypeptide: Pathogenesis-related homeodomain protein (796 aa).

Disordered regions lie at residues 34–57 (KKGKEVSNKRNSKQNKRKAEEELC) and 80–99 (VKKTRKRKSKRQQKDNKVEV). Basic residues predominate over residues 81–90 (KKTRKRKSKR). A PHD-type zinc finger spans residues 190–247 (HIFCAECNSREAFPDNDIILCDGTCNRAFHQKCLDPPLETESIPPGDQGWFCKFCDCK). Disordered regions lie at residues 282-347 (SEAT…STGS), 393-422 (LQEQGSEDEDWGPNDRRKRKRESDAGSTLV), and 511-736 (NRKT…TEEE). The span at 292–303 (WPSDDSKDDDYD) shows a compositional bias: acidic residues. The homeobox DNA-binding region spans 452–511 (GGRRRMFRLPRNAVEKLRQVFAETELPSKAVRDRLAKELSLDPEKVNKWFKNTRYMALRN). 2 stretches are compositionally biased toward polar residues: residues 538 to 547 (ENNTETNEVQ) and 560 to 569 (ATNQNILSPC). The segment covering 570-580 (NNNQEEFQQEN) has biased composition (low complexity). Over residues 581–600 (VSFPSPTDESQQYLEQNDSS) the composition is skewed to polar residues. 4 repeat units span residues 605-631 (PHEKQSSEISLKTAVEENETESKMMKE), 632-658 (PHEELSSEMSLKTAAEEKETESKMIEE), 659-685 (PHEELSREMSLKTAVEEKETESKMMEE), and 686-712 (PHDELNSEMSLSTAVEEKETGSKMTEE). Residues 605–735 (PHEKQSSEIS…KETGRKMTEE (131 aa)) form a 5 X 27 AA tandem repeats region. 3 stretches are compositionally biased toward basic and acidic residues: residues 624–636 (TESKMMKEPHEEL), 645–690 (AAEE…HDEL), and 700–733 (VEEKETGSKMTEESHEELSNEMSLEEKETGRKMT). Residues 713–735 (SHEELSNEMSLEEKETGRKMTEE) form a 5; truncated repeat. Residues 738-759 (LEAVMEMLCRTENKLLDVTQRL) form a leucine-zipper region.

It belongs to the PHD-associated homeobox family.

The protein resides in the nucleus. Functionally, specifically binds to the fungal elicitor-responsive DNA element, 5'-CTAATTGTTTA-3', of the gene PR2 promoter. This chain is Pathogenesis-related homeodomain protein (PRH), found in Arabidopsis thaliana (Mouse-ear cress).